We begin with the raw amino-acid sequence, 243 residues long: Auxin-induced protein AUX28 (243 aa).

An EAR-like (transcriptional repression) motif is present at residues 8–12 (LRLGL). Positions 54 to 91 (AATTAAAAADPTDKHKTLPKEKTLLPADPAKPPAKTQV) are disordered. Basic and acidic residues predominate over residues 64–76 (PTDKHKTLPKEKT). Residues 77-89 (LLPADPAKPPAKT) are compositionally biased toward low complexity. In terms of domain architecture, PB1 spans 123-223 (ASFVKVSMDG…SCKRLRIMKG (101 aa)).

It belongs to the Aux/IAA family. Homodimers and heterodimers.

It localises to the nucleus. In terms of biological role, aux/IAA proteins are short-lived transcriptional factors that function as repressors of early auxin response genes at low auxin concentrations. Repression is thought to result from the interaction with auxin response factors (ARFs), proteins that bind to the auxin-responsive promoter element (AuxRE). Formation of heterodimers with ARF proteins may alter their ability to modulate early auxin response genes expression. The polypeptide is Auxin-induced protein AUX28 (AUX28) (Glycine max (Soybean)).